Reading from the N-terminus, the 319-residue chain is Myoblast determination protein 1 (319 aa).

Met-1 participates in a covalent cross-link: Peptide (Met-Gly) (interchain with G-Cter in ubiquitin). The residue at position 104 (Lys-104) is an N6-methyllysine; by EHMT2. The region spanning Asp-109 to Leu-160 is the bHLH domain. Disordered regions lie at residues Ala-174 to Arg-221 and Ala-266 to Leu-319. Composition is skewed to polar residues over residues Ser-197–Ser-207 and Ala-308–Leu-319.

In terms of assembly, efficient DNA binding requires dimerization with another bHLH protein. Seems to form active heterodimers with ITF-2. Interacts with SUV39H1. Interacts with DDX5. Interacts with CHD2. Interacts with TSC22D3. Interacts with SETD3. Interacts with P-TEFB complex; promotes the transcriptional activity of MYOD1 through its CDK9-mediated phosphorylation. Interacts with CSRP3. Interacts with NUPR1. Post-translationally, phosphorylated by CDK9. This phosphorylation promotes its function in muscle differentiation. Acetylated by a complex containing EP300 and PCAF. The acetylation is essential to activate target genes. Conversely, its deacetylation by SIRT1 inhibits its function. In terms of processing, ubiquitinated on the N-terminus; which is required for proteasomal degradation. Post-translationally, methylation at Lys-104 by EHMT2/G9a inhibits myogenic activity.

The protein resides in the nucleus. Acts as a transcriptional activator that promotes transcription of muscle-specific target genes and plays a role in muscle differentiation. Together with MYF5 and MYOG, co-occupies muscle-specific gene promoter core region during myogenesis. Induces fibroblasts to differentiate into myoblasts. Interacts with and is inhibited by the twist protein. This interaction probably involves the basic domains of both proteins. In Sus scrofa (Pig), this protein is Myoblast determination protein 1 (MYOD1).